The primary structure comprises 32 residues: uncharacterized protein (32 aa).

This is an uncharacterized protein from Haloarcula hispanica (His1V).